A 329-amino-acid polypeptide reads, in one-letter code: uncharacterized protein (329 aa).

Residues 56-247 (LNKEEQFQED…EAEKTHQAKL (192 aa)) adopt a coiled-coil conformation.

This is an uncharacterized protein from Bos taurus (Bovine).